The sequence spans 247 residues: uncharacterized protein (247 aa).

Helical transmembrane passes span 19–39 (IFFTFLLCFIICTIYSESIMF), 73–93 (FFTSIYCTFPYFFYQFWAFFI), 106–126 (FLSFFFFTLLFFSCIIIYFII), 155–175 (YIQFTFQIFSYFFVLFQCPLF), 196–216 (YIYFLFLILAAFLSPPDILSQ), and 217–237 (FFLFSLIVFMYELCVFYSCFY).

This sequence belongs to the TatC family.

Its subcellular location is the mitochondrion membrane. This is an uncharacterized protein from Nephroselmis olivacea (Green alga).